The chain runs to 337 residues: Large ribosomal subunit protein uL3 (337 aa).

The interval 1–29 (MPKINRPRRGSLAFSPRKRAQSPIPKYKS) is disordered.

The protein belongs to the universal ribosomal protein uL3 family. As to quaternary structure, part of the 50S ribosomal subunit. Forms a cluster with proteins L14 and L24e.

In terms of biological role, one of the primary rRNA binding proteins, it binds directly near the 3'-end of the 23S rRNA, where it nucleates assembly of the 50S subunit. This chain is Large ribosomal subunit protein uL3, found in Methanoregula boonei (strain DSM 21154 / JCM 14090 / 6A8).